We begin with the raw amino-acid sequence, 437 residues long: Succinyl-CoA:cyclohexane-1-carboxylate CoA transferase (437 aa).

221–225 (GWGGI) is a binding site for CoA. Glu-244 functions as the 5-glutamyl coenzyme A thioester intermediate in the catalytic mechanism. The CoA site is built by Leu-319, Gly-342, and Lys-367.

It belongs to the acetyl-CoA hydrolase/transferase family. As to quaternary structure, homodimer.

The catalysed reaction is cyclohexane-1-carboxylate + succinyl-CoA = cyclohexane-1-carbonyl-CoA + succinate. It carries out the reaction cyclohexane-1-carboxylate + butanoyl-CoA = cyclohexane-1-carbonyl-CoA + butanoate. Functionally, acyl-CoA transferase involved in the anaerobic degradation of cyclohexane carboxylic acid (CHC). Catalyzes the activation of CHC to cyclohexane-1-carbonyl-CoA (CHCoA). Benzoic acid and cyclohex-1-ene-1-carboxylic acid can also be used as substrates, but with lower specific activity. Shows highest activity with succinyl-CoA and butanoyl-coA as a CoA donor, and lower activity with crotonyl-CoA, acetyl-CoA, glutaryl-CoA, CH1eneCoA, propionyl-CoA and acetoacetyl-CoA. In vitro, the enzyme can use butanoyl-coA as a CoA donor with greater efficiency than succinyl-CoA. However, succinyl-CoA is the most abundant CoA ester in exponentially grown cells, whereas butanoyl-coA is hardly detectable, indicating that succinyl-CoA is the natural CoA donor for CHC activation. The chain is Succinyl-CoA:cyclohexane-1-carboxylate CoA transferase from Geobacter metallireducens (strain ATCC 53774 / DSM 7210 / GS-15).